The following is a 3078-amino-acid chain: Homeobox-like protein HDP1 (3078 aa).

Disordered regions lie at residues M1–N29, L59–N164, S203–K306, N949–N980, D1323–K1390, S1415–N1445, K1939–F2046, T2115–Y2216, A2599–I2637, and Q2959–P3019. Positions C14 to N29 are enriched in polar residues. Residues L59–I84 are compositionally biased toward basic and acidic residues. Low complexity-rich tracts occupy residues N85–N94 and N114–N127. Composition is skewed to polar residues over residues I128 to T137, K148 to H157, N209 to T229, T237 to H252, and N949 to H960. Over residues R1368–H1380 the composition is skewed to basic residues. The span at S1415–S1433 shows a compositional bias: low complexity. Residues T1434–N1445 are compositionally biased toward polar residues. The span at K1939–N1993 shows a compositional bias: low complexity. Composition is skewed to basic and acidic residues over residues K2012–L2021 and Y2029–F2046. Residues T2115–N2126 are compositionally biased toward polar residues. The segment covering M2139 to V2160 has biased composition (low complexity). The segment covering D2163–E2177 has biased composition (basic and acidic residues). Positions N2192 to D2201 are enriched in acidic residues. 3 stretches are compositionally biased toward low complexity: residues N2202–Y2216, N2602–D2630, and Q2959–N2989. The segment covering L2990–I3006 has biased composition (polar residues). Residues S2991 to K3078 are DNA-binding.

In terms of assembly, homodimer.

The protein localises to the nucleus. It is found in the chromosome. Its function is as follows. Transcriptional regulator which binds to the DNA motifs 5'-GTGCACAC-3' (motif A) and 5'-[GTA]TGTA[CT][GA]TAC-3' (motif B) of genes essential for early gametocyte development, including those critical for the expansion of the inner membrane complex (IMC). The chain is Homeobox-like protein HDP1 from Plasmodium falciparum (isolate NF54).